Reading from the N-terminus, the 423-residue chain is Gamma-glutamyl phosphate reductase (423 aa).

This sequence belongs to the gamma-glutamyl phosphate reductase family.

It is found in the cytoplasm. The enzyme catalyses L-glutamate 5-semialdehyde + phosphate + NADP(+) = L-glutamyl 5-phosphate + NADPH + H(+). Its pathway is amino-acid biosynthesis; L-proline biosynthesis; L-glutamate 5-semialdehyde from L-glutamate: step 2/2. Catalyzes the NADPH-dependent reduction of L-glutamate 5-phosphate into L-glutamate 5-semialdehyde and phosphate. The product spontaneously undergoes cyclization to form 1-pyrroline-5-carboxylate. The sequence is that of Gamma-glutamyl phosphate reductase from Pseudomonas putida (strain ATCC 700007 / DSM 6899 / JCM 31910 / BCRC 17059 / LMG 24140 / F1).